We begin with the raw amino-acid sequence, 341 residues long: UDP-glucose 4-epimerase (341 aa).

The protein belongs to the polysaccharide synthase family.

The catalysed reaction is UDP-alpha-D-glucose = UDP-alpha-D-galactose. Its function is as follows. Epimerizes UDP-galactose to UDP-glucose. This chain is UDP-glucose 4-epimerase (capD), found in Rickettsia akari (strain Hartford).